A 758-amino-acid polypeptide reads, in one-letter code: Vitamin K-dependent gamma-carboxylase (758 aa).

The interval 1 to 29 (MAVHRGSARAAPASDKVQKNKPAQTSGLE) is disordered. The residue at position 2 (A2) is an N-acetylalanine. Over 2–60 (AVHRGSARAAPASDKVQKNKPAQTSGLEQGSRMARIFGFEWADLSSWQSVVTLLNRPTD) the chain is Cytoplasmic. The chain crosses the membrane as a helical span at residues 61-81 (PANLAVFRFLFAFLMLLDIPQ). Topologically, residues 82-113 (ERGLSSLDRKYLDGLDVCRFPLLDALRPLPLD) are lumenal. C99 and C450 are disulfide-bonded. A helical transmembrane segment spans residues 114-134 (WMYLVYTIMFLGALGMMLGLW). Over 135 to 136 (YR) the chain is Cytoplasmic. The helical transmembrane segment at 137–157 (LSCMLFLLPYWYVFLLDKTSW) threads the bilayer. Over 158-292 (NNHSYLYGLL…VSYFHCMNSQ (135 aa)) the chain is Lumenal. Residues 293-313 (LFSIGMFPYVMLASSPLFCSA) traverse the membrane as a helical segment. At 314–361 (EWPRKLVARCPKRLQELLPAKAAPRPSASCVYKRARAKAGQKPGLRHH) the chain is on the cytoplasmic side. The helical transmembrane segment at 362–382 (LGTVFTLLYLLEQLFLPYSHF) threads the bilayer. The Lumenal portion of the chain corresponds to 383–758 (LTQGYNNWTN…PDSEHVHSEL (376 aa)). Positions 727–758 (PFEPVDESSASNTDSSDPHPSEPDSEHVHSEL) are disordered. A compositionally biased stretch (basic and acidic residues) spans 742-758 (SDPHPSEPDSEHVHSEL).

The protein belongs to the vitamin K-dependent gamma-carboxylase family. As to quaternary structure, monomer. Interacts with CALU.

The protein resides in the endoplasmic reticulum membrane. The catalysed reaction is 4-carboxy-L-glutamyl-[protein] + 2,3-epoxyphylloquinone + H2O + H(+) = phylloquinol + L-glutamyl-[protein] + CO2 + O2. In terms of biological role, mediates the vitamin K-dependent carboxylation of glutamate residues to calcium-binding gamma-carboxyglutamate (Gla) residues with the concomitant conversion of the reduced hydroquinone form of vitamin K to vitamin K epoxide. Catalyzes gamma-carboxylation of various proteins, such as blood coagulation factors (F2, F7, F9 and F10), osteocalcin (BGLAP) or matrix Gla protein (MGP). This chain is Vitamin K-dependent gamma-carboxylase (Ggcx), found in Rattus norvegicus (Rat).